Consider the following 516-residue polypeptide: MATSGKQYGLILPQKRASKSAPLARPSVFGDDSDDETSVGESLQKEAIKKKMMKQTRLEMQKALEEDSTVYEYDNVYDDIQKQRLESNKKLLGGEDKKPKYINQLLRAVEERKKEQERRDERKIQKEREAEGEKFADKEAFVTSAYRQKLKERQEELEREKREAELEAALDVKKQKDLSGFYRHFLNQTVGEEVVPDRSAQSEEKATSSAAAERSPSPESTANRRESEAESHSDDDQVDVKPAFSKTTANNHAKRQYRQKSPLSDSDDGDERERERKEIKEKSHKDRDRDRAKEKERERMRDKDKHSHRKEDRGGDRRRERDREEDRARDRRDRDRNDRHGIRDRRNSSPKDRERDRKGERDRRDNSPKDRERDRKGERDRRDNSPKDRERETRDKSPKDRRDKSPKDRDRERRDKSPKDREPERKGERDIREREDNKVDSQRKNQEDEKSSKSKTEHGKEEKLVEETENSSGAQQEISKFAKRSSDQTVSSARERYLARQLARFASKSYVEKEED.

4 disordered regions span residues 1 to 43 (MATS…GESL), 111 to 137 (ERKKEQERRDERKIQKEREAEGEKFAD), 151 to 170 (KERQEELEREKREAELEAAL), and 188 to 494 (QTVG…SSAR). At Ser-33 the chain carries Phosphoserine. The stretch at 100-176 (KYINQLLRAV…EAALDVKKQK (77 aa)) forms a coiled coil. Low complexity predominate over residues 207 to 221 (TSSAAAERSPSPEST). Basic and acidic residues-rich tracts occupy residues 222 to 239 (ANRRESEAESHSDDDQVD) and 271 to 466 (ERER…KLVE). Residues 358–401 (KGERDRRDNSPKDRERDRKGERDRRDNSPKDRERETRDKSPKDR) adopt a coiled-coil conformation.

This sequence belongs to the NSRP1 family.

This chain is Nuclear speckle splicing regulatory protein 1 (nsrp1), found in Danio rerio (Zebrafish).